We begin with the raw amino-acid sequence, 494 residues long: Serine/threonine-protein kinase cst-1 (494 aa).

The tract at residues 1-27 is disordered; the sequence is MPPSTDSSRRNSEEGFSDGFKLDSSAL. In terms of domain architecture, Protein kinase spans 35–286; it reads FDIVGKLGEG…ALRLCEHTFI (252 aa). Residues 41 to 49 and K64 contribute to the ATP site; that span reads LGEGSYGSV. D154 (proton acceptor) is an active-site residue. Residues 364–413 are disordered; that stretch reads IPKSAYGSSRNNGSPRVQPPGHTASACDPSNNPPFAEEGTGPNFQIGTSE. Polar residues predominate over residues 369 to 378; the sequence is YGSSRNNGSP. Residues 443–490 enclose the SARAH domain; sequence FEFLRNITLDELIRRKESLDSEMEEEIRELQRRYKTKRQPILDVIEIK.

Belongs to the protein kinase superfamily. STE Ser/Thr protein kinase family. STE20 subfamily. It depends on Mg(2+) as a cofactor. Proteolytically cleaved by caspase-3 during apoptosis which results in kinase activation.

The catalysed reaction is L-seryl-[protein] + ATP = O-phospho-L-seryl-[protein] + ADP + H(+). It catalyses the reaction L-threonyl-[protein] + ATP = O-phospho-L-threonyl-[protein] + ADP + H(+). In terms of biological role, serine/threonine-protein kinase which extends lifespan and delays tissue aging, probably by activating daf-16. In Caenorhabditis briggsae, this protein is Serine/threonine-protein kinase cst-1 (cst-1).